The primary structure comprises 109 residues: Cortistatin (109 aa).

An N-terminal signal peptide occupies residues 1 to 25 (MMGGRGTGGKWPSAFGLLLLWGVAA). A propeptide spanning residues 26–93 (SALPLESGPT…PPPQQPPHLD (68 aa)) is cleaved from the precursor. The interval 64–97 (ASSSTPVGGGTPGLSKSQERPPPQQPPHLDKKPC) is disordered. Cysteines 97 and 108 form a disulfide.

The protein belongs to the somatostatin family. In terms of tissue distribution, expressed in a subset of GABAergic cells in the cortex and hippocampus.

The protein localises to the secreted. This chain is Cortistatin (Cort), found in Mus musculus (Mouse).